The primary structure comprises 164 residues: Protein-export protein SecB (164 aa).

The protein belongs to the SecB family. Homotetramer, a dimer of dimers. One homotetramer interacts with 1 SecA dimer.

The protein resides in the cytoplasm. Functionally, one of the proteins required for the normal export of preproteins out of the cell cytoplasm. It is a molecular chaperone that binds to a subset of precursor proteins, maintaining them in a translocation-competent state. It also specifically binds to its receptor SecA. The polypeptide is Protein-export protein SecB (Janthinobacterium sp. (strain Marseille) (Minibacterium massiliensis)).